A 201-amino-acid polypeptide reads, in one-letter code: Lipopolysaccharide core heptose(II)-phosphate phosphatase (201 aa).

Positions M1–S35 are cleaved as a signal peptide.

It belongs to the phosphoglycerate mutase family. Ais subfamily.

Its subcellular location is the periplasm. The protein operates within bacterial outer membrane biogenesis; lipopolysaccharide metabolism. Functionally, catalyzes the dephosphorylation of heptose(II) of the outer membrane lipopolysaccharide core. In Salmonella heidelberg (strain SL476), this protein is Lipopolysaccharide core heptose(II)-phosphate phosphatase.